The sequence spans 69 residues: Large ribosomal subunit protein uL29 (69 aa).

The protein belongs to the universal ribosomal protein uL29 family.

This is Large ribosomal subunit protein uL29 from Staphylococcus aureus (strain Mu3 / ATCC 700698).